The primary structure comprises 174 residues: Eukaryotic translation elongation factor 1 epsilon-1 (174 aa).

Ala-2 is subject to N-acetylalanine. The interval Ala-2 to Asn-56 is N-terminal. The 124-residue stretch at His-50–Ser-173 folds into the GST C-terminal domain. The tract at residues Lys-57–Ser-63 is linker. The interval Thr-64–Tyr-152 is C-terminal. Lys-138 carries the post-translational modification N6-acetyllysine. Positions Pro-153 to Leu-169 form a coiled coil.

In terms of assembly, part of a multisubunit complex that groups tRNA ligases for Arg (RARS1), Asp (DARS1), Gln (QARS1), Ile (IARS1), Leu (LARS1), Lys (KARS1), Met (MARS1) the bifunctional ligase for Glu and Pro (EPRS1) and the auxiliary subunits AIMP1/p43, AIMP2/p38 and EEF1E1/p18. Can interact simultaneously with MARS1 and EPRS1. Forms a linear complex that contains MARS1, EEF1E1, EPRS1 and AIMP2 that is at the core of the multisubunit complex. Interacts with ATM and ATR. The interaction with ATM, which takes place independently of TP53, is induced by DNA damage that may occur during genotoxic stress or cell growth. The interaction with ATR is enhanced by UV irradiation. Down-regulated in various cancer tissues.

Its subcellular location is the cytoplasm. The protein localises to the cytosol. It localises to the nucleus. In terms of biological role, positive modulator of ATM response to DNA damage. The protein is Eukaryotic translation elongation factor 1 epsilon-1 (EEF1E1) of Homo sapiens (Human).